Reading from the N-terminus, the 333-residue chain is Trimethylamine N-oxide-binding protein (333 aa).

The N-terminal stretch at M1–A42 is a signal peptide. W55, W102, E131, W177, and W222 together coordinate trimethylamine N-oxide. The Ca(2+) site is built by P249, V251, N254, A257, and D260.

As to quaternary structure, the complex is probably composed of two ATP-binding proteins (TmoW), two transmembrane proteins (TmoV) and a solute-binding protein (TmoX). Monomer in solution, but forms homodimers in crystals.

The protein resides in the periplasm. Its activity is regulated as follows. Binds a Ca(2+) ion, which has little effect on either the binding affinity or the secondary structure, but plays an important role in maintaining the stability of TmoX. It may modulate the protein stability in response to biological needs and environmental changes. Thermostability is dramatically decreased when Ca(2+) is removed by EDTA. Its function is as follows. Part of the ABC transporter complex TmoXWV involved in trimethylamine N-oxide (TMAO) import. Is specific for TMAO and essential for TMAO metabolism. Binds TMAO with high affinity. In vitro, also presents a high binding affinity for choline, however this transporter seems specific for TMAO and the choline-binding affinity presented by recombinant TmoX may not make physiological sense. The protein is Trimethylamine N-oxide-binding protein of Ruegeria pomeroyi (strain ATCC 700808 / DSM 15171 / DSS-3) (Silicibacter pomeroyi).